Reading from the N-terminus, the 83-residue chain is U5-theraphotoxin-Hs1d (83 aa).

The first 21 residues, 1–21 (MKTSMFLTLTGLVLLFVVCYA), serve as a signal peptide directing secretion. Positions 22–49 (SESEEKEFPKELLSSIFAADSDFKVEER) are excised as a propeptide. 3 disulfide bridges follow: C51-C63, C56-C68, and C62-C75.

It belongs to the neurotoxin 10 (Hwtx-1) family. 51 (Hntx-8) subfamily. Hntx-8 sub-subfamily. Expressed by the venom gland.

It is found in the secreted. Its function is as follows. Agglutinates erythrocytes. This is U5-theraphotoxin-Hs1d from Cyriopagopus schmidti (Chinese bird spider).